The chain runs to 60 residues: Large ribosomal subunit protein uL30 (60 aa).

The protein belongs to the universal ribosomal protein uL30 family. Part of the 50S ribosomal subunit.

The chain is Large ribosomal subunit protein uL30 from Syntrophobacter fumaroxidans (strain DSM 10017 / MPOB).